A 725-amino-acid polypeptide reads, in one-letter code: Calcium-responsive transcription factor (725 aa).

Residues 572-592 form a disordered region; that stretch reads TSPDESPAVVSVNNQPSSSPS. A compositionally biased stretch (low complexity) spans 577–592; that stretch reads SPAVVSVNNQPSSSPS.

The protein resides in the nucleus. Functionally, acts as a transcriptional activator that mediates the calcium- and neuron-selective induction of BDNF exon III transcription. Binds to the consensus calcium-response element CaRE1 5'-CTATTTCGAG-3' sequence. The polypeptide is Calcium-responsive transcription factor (CARF) (Homo sapiens (Human)).